The primary structure comprises 171 residues: 3-hydroxydecanoyl-[acyl-carrier-protein] dehydratase (171 aa).

The active site involves His-70.

It belongs to the thioester dehydratase family. FabA subfamily. In terms of assembly, homodimer.

It localises to the cytoplasm. The enzyme catalyses a (3R)-hydroxyacyl-[ACP] = a (2E)-enoyl-[ACP] + H2O. The catalysed reaction is (3R)-hydroxydecanoyl-[ACP] = (2E)-decenoyl-[ACP] + H2O. It carries out the reaction (2E)-decenoyl-[ACP] = (3Z)-decenoyl-[ACP]. It functions in the pathway lipid metabolism; fatty acid biosynthesis. Its function is as follows. Necessary for the introduction of cis unsaturation into fatty acids. Catalyzes the dehydration of (3R)-3-hydroxydecanoyl-ACP to E-(2)-decenoyl-ACP and then its isomerization to Z-(3)-decenoyl-ACP. Can catalyze the dehydratase reaction for beta-hydroxyacyl-ACPs with saturated chain lengths up to 16:0, being most active on intermediate chain length. The protein is 3-hydroxydecanoyl-[acyl-carrier-protein] dehydratase of Shewanella woodyi (strain ATCC 51908 / MS32).